A 65-amino-acid polypeptide reads, in one-letter code: Large ribosomal subunit protein bL35 (65 aa).

It belongs to the bacterial ribosomal protein bL35 family.

The sequence is that of Large ribosomal subunit protein bL35 from Thermotoga maritima (strain ATCC 43589 / DSM 3109 / JCM 10099 / NBRC 100826 / MSB8).